Consider the following 199-residue polypeptide: Rho-related protein racG (199 aa).

Residues alanine 13, glycine 15, lysine 16, threonine 17, cysteine 18, tyrosine 32, and threonine 35 each contribute to the GTP site. Threonine 17 serves as a coordination point for Mg(2+). Short sequence motifs (switch) lie at residues asparagine 26–phenylalanine 37 and aspartate 57–threonine 75. Threonine 35 contacts Mg(2+). GTP-binding residues include lysine 116, aspartate 118, and alanine 159. Cysteine 196 carries the post-translational modification Cysteine methyl ester. Cysteine 196 carries S-geranylgeranyl cysteine lipidation. The propeptide at serine 197–phenylalanine 199 is removed in mature form.

Belongs to the small GTPase superfamily. Rho family. It depends on Mg(2+) as a cofactor.

Its subcellular location is the cell membrane. The protein localises to the cytoplasm. It localises to the cytoskeleton. It carries out the reaction GTP + H2O = GDP + phosphate + H(+). Its activity is regulated as follows. Regulated by guanine nucleotide exchange factors (GEFs) which promote the exchange of bound GDP for free GTP, GTPase activating proteins (GAPs) which increase the GTP hydrolysis activity, and GDP dissociation inhibitors which inhibit the dissociation of the nucleotide from the GTPase. Its function is as follows. Small GTPase which cycles between active GTP-bound and inactive GDP-bound states. Involved in actin cytoskeleton remodeling during capping of surface receptors and uroid formation. The sequence is that of Rho-related protein racG from Entamoeba histolytica (strain ATCC 30459 / HM-1:IMSS / ABRM).